Reading from the N-terminus, the 63-residue chain is Protein virE1 (63 aa).

As to quaternary structure, forms heterodimers with virE2 that prevent virE2 anarchic homopolymerization and binding to DNA.

Its function is as follows. Involved in DNA transformation; controls virE2 polymerization and prevents virE2 binding to DNA. This Agrobacterium fabrum (strain C58 / ATCC 33970) (Agrobacterium tumefaciens (strain C58)) protein is Protein virE1 (virE1).